A 176-amino-acid polypeptide reads, in one-letter code: NAD(P)H-quinone oxidoreductase subunit 6, chloroplastic (176 aa).

The next 5 helical transmembrane spans lie at 10-30, 33-53, 60-80, 95-115, and 152-172; these read ILMLFGGFVLLLGGLGVVLLT, IYSAFSLGLVLVCISLFYFLL, VAQLLIYVGAINVLIIFAVMF, IGDGFTSIVCITIVFSLMTTI, and FYLPFELISIILLVSLIGAIT.

Belongs to the complex I subunit 6 family. As to quaternary structure, NDH is composed of at least 16 different subunits, 5 of which are encoded in the nucleus.

The protein localises to the plastid. The protein resides in the chloroplast thylakoid membrane. It carries out the reaction a plastoquinone + NADH + (n+1) H(+)(in) = a plastoquinol + NAD(+) + n H(+)(out). It catalyses the reaction a plastoquinone + NADPH + (n+1) H(+)(in) = a plastoquinol + NADP(+) + n H(+)(out). Its function is as follows. NDH shuttles electrons from NAD(P)H:plastoquinone, via FMN and iron-sulfur (Fe-S) centers, to quinones in the photosynthetic chain and possibly in a chloroplast respiratory chain. The immediate electron acceptor for the enzyme in this species is believed to be plastoquinone. Couples the redox reaction to proton translocation, and thus conserves the redox energy in a proton gradient. The protein is NAD(P)H-quinone oxidoreductase subunit 6, chloroplastic (ndhG) of Lolium perenne (Perennial ryegrass).